The sequence spans 140 residues: Organic hydroperoxide resistance protein-like (140 aa).

This sequence belongs to the OsmC/Ohr family.

The protein is Organic hydroperoxide resistance protein-like of Staphylococcus aureus (strain MSSA476).